The sequence spans 152 residues: uncharacterized protein (152 aa).

The protein belongs to the transposase 8 family.

This is an uncharacterized protein from Sinorhizobium fredii (strain NBRC 101917 / NGR234).